The primary structure comprises 409 residues: Tryptophan synthase beta chain (409 aa).

Lys95 is subject to N6-(pyridoxal phosphate)lysine.

This sequence belongs to the TrpB family. Tetramer of two alpha and two beta chains. Pyridoxal 5'-phosphate serves as cofactor.

It carries out the reaction (1S,2R)-1-C-(indol-3-yl)glycerol 3-phosphate + L-serine = D-glyceraldehyde 3-phosphate + L-tryptophan + H2O. It participates in amino-acid biosynthesis; L-tryptophan biosynthesis; L-tryptophan from chorismate: step 5/5. In terms of biological role, the beta subunit is responsible for the synthesis of L-tryptophan from indole and L-serine. The polypeptide is Tryptophan synthase beta chain (Pseudomonas syringae pv. tomato (strain ATCC BAA-871 / DC3000)).